Reading from the N-terminus, the 257-residue chain is Imidazole glycerol phosphate synthase subunit HisF (257 aa).

Residues D11 and D130 contribute to the active site.

This sequence belongs to the HisA/HisF family. Heterodimer of HisH and HisF.

Its subcellular location is the cytoplasm. It catalyses the reaction 5-[(5-phospho-1-deoxy-D-ribulos-1-ylimino)methylamino]-1-(5-phospho-beta-D-ribosyl)imidazole-4-carboxamide + L-glutamine = D-erythro-1-(imidazol-4-yl)glycerol 3-phosphate + 5-amino-1-(5-phospho-beta-D-ribosyl)imidazole-4-carboxamide + L-glutamate + H(+). It participates in amino-acid biosynthesis; L-histidine biosynthesis; L-histidine from 5-phospho-alpha-D-ribose 1-diphosphate: step 5/9. Functionally, IGPS catalyzes the conversion of PRFAR and glutamine to IGP, AICAR and glutamate. The HisF subunit catalyzes the cyclization activity that produces IGP and AICAR from PRFAR using the ammonia provided by the HisH subunit. The chain is Imidazole glycerol phosphate synthase subunit HisF from Prochlorococcus marinus (strain MIT 9515).